Reading from the N-terminus, the 216-residue chain is MTEQLIDIAALRREYTRGGLRRADLTAEPMDLFEQWLKQACAAQLPDATAMSVGTVDENGQPYQRLVLLKHFDRQGMVFYTNLGSRKAAHLAHNPRISLHFPWHVLERQVLVLGRAERLSVIEVMKYFHSRPRDSQIGAWVSRQSSRISSRGVLESKFLELKQKFAQGDVPLPSFWGGYRVSIEAMEFWQGGEHRMHDRFLYRRENGGWHIDRLAP.

Substrate is bound by residues 12-15 (RREY) and K70. FMN-binding positions include 65–70 (RLVLLK), 80–81 (YT), R86, K87, and Q109. Y127, R131, and S135 together coordinate substrate. FMN-binding positions include 144–145 (QS) and W189. 195–197 (RMH) serves as a coordination point for substrate. Position 199 (R199) interacts with FMN.

The protein belongs to the pyridoxamine 5'-phosphate oxidase family. As to quaternary structure, homodimer. FMN is required as a cofactor.

It catalyses the reaction pyridoxamine 5'-phosphate + O2 + H2O = pyridoxal 5'-phosphate + H2O2 + NH4(+). The catalysed reaction is pyridoxine 5'-phosphate + O2 = pyridoxal 5'-phosphate + H2O2. It participates in cofactor metabolism; pyridoxal 5'-phosphate salvage; pyridoxal 5'-phosphate from pyridoxamine 5'-phosphate: step 1/1. The protein operates within cofactor metabolism; pyridoxal 5'-phosphate salvage; pyridoxal 5'-phosphate from pyridoxine 5'-phosphate: step 1/1. Its function is as follows. Catalyzes the oxidation of either pyridoxine 5'-phosphate (PNP) or pyridoxamine 5'-phosphate (PMP) into pyridoxal 5'-phosphate (PLP). The sequence is that of Pyridoxine/pyridoxamine 5'-phosphate oxidase from Sodalis glossinidius (strain morsitans).